The following is a 508-amino-acid chain: Photosystem II CP47 reaction center protein (508 aa).

6 helical membrane-spanning segments follow: residues 21 to 36 (SVHIMHTALVAGWAGS), 101 to 115 (IVFSGLCFLAAIWHW), 140 to 156 (GIHLFLSGVACFGFGAF), 203 to 218 (IAAGILGILAGLFHLS), 237 to 252 (VLSSSIAAVFFAAFIV), and 457 to 472 (TFALLFFSGHIWHGAR).

The protein belongs to the PsbB/PsbC family. PsbB subfamily. PSII is composed of 1 copy each of membrane proteins PsbA, PsbB, PsbC, PsbD, PsbE, PsbF, PsbH, PsbI, PsbJ, PsbK, PsbL, PsbM, PsbT, PsbX, PsbY, PsbZ, Psb30/Ycf12, at least 3 peripheral proteins of the oxygen-evolving complex and a large number of cofactors. It forms dimeric complexes. Binds multiple chlorophylls. PSII binds additional chlorophylls, carotenoids and specific lipids. is required as a cofactor.

Its subcellular location is the plastid. The protein resides in the chloroplast thylakoid membrane. One of the components of the core complex of photosystem II (PSII). It binds chlorophyll and helps catalyze the primary light-induced photochemical processes of PSII. PSII is a light-driven water:plastoquinone oxidoreductase, using light energy to abstract electrons from H(2)O, generating O(2) and a proton gradient subsequently used for ATP formation. This chain is Photosystem II CP47 reaction center protein, found in Pinus thunbergii (Japanese black pine).